A 400-amino-acid chain; its full sequence is Tryptophan--tRNA ligase, cytoplasmic (400 aa).

The short motif at 95-104 is the 'HIGH' region element; it reads PSSGSLHFGH. The 'KMSKS' region signature appears at 281 to 285; it reads KMSAS.

This sequence belongs to the class-I aminoacyl-tRNA synthetase family.

It is found in the cytoplasm. The catalysed reaction is tRNA(Trp) + L-tryptophan + ATP = L-tryptophyl-tRNA(Trp) + AMP + diphosphate + H(+). The protein is Tryptophan--tRNA ligase, cytoplasmic (trpS) of Dictyostelium discoideum (Social amoeba).